A 333-amino-acid chain; its full sequence is Terminal uridylyltransferase 4 (333 aa).

UTP is bound by residues Ser54 and 65–68; that span reads SDVD. Positions 66 and 68 each coordinate Mg(2+). Residue Arg121 coordinates RNA. UTP-binding positions include 144 to 148, Lys169, Lys173, and 188 to 189; these read GVRNS and SY. The region spanning 237–302 is the PAP-associated domain; it reads LGTQVLDFLH…WCIEDPYELN (66 aa).

It belongs to the DNA polymerase type-B-like family. Monomer. The cofactor is Mg(2+). Requires Mn(2+) as cofactor.

It catalyses the reaction RNA(n) + UTP = RNA(n)-3'-uridine ribonucleotide + diphosphate. With respect to regulation, the 3' uridylated RNA substrate is involved in the selective incorporation of UTP; UTP binding is favored due to the constraint posed on the positioning of the NTP base by the continuous stacking interactions between Tyr-189 side chain, the bound NTP, and the terminal nucleoside base of the RNA substrate. In terms of biological role, terminal uridylyltransferase which, specifically, catalyzes the addition of Us to the 3'-hydroxyl group of single-stranded RNAs with a 3'-terminal U. The sequence is that of Terminal uridylyltransferase 4 from Trypanosoma brucei brucei (strain 927/4 GUTat10.1).